A 341-amino-acid chain; its full sequence is MFASRILRNSAQTLKTELPHKETIKMAYDLHKPRSTAIRHLNENPEEPILFLHGIFGSKKSYATDSKLIASSTHTPVYTMDLRNHGETGHAQPFNYETLAQDVKEFCDEHKLDKVKLIGYSLGAKVSMLTALQFPNLVKSAVIIDNAPIPQPQIQLFMKQYIKSMLHVLNESKIRADDKDWKNKASAAMKRFLPNGVIRKNLLVNLVNKPPKDFESPVIDFEDGYIHFLNPIEQMEEMAVKDVTDWPVETTKDLKFEGPVKFIKGLQSPFITDEGMKAIQTHFPNNDFTDVNSNHDILDQRPSEYVKIITDFFNKQRYQSAPDDTILGNKTPTPKQTEVSA.

A mitochondrion-targeting transit peptide spans 1 to 40; the sequence is MFASRILRNSAQTLKTELPHKETIKMAYDLHKPRSTAIRH. The region spanning 48–301 is the AB hydrolase-1 domain; that stretch reads PILFLHGIFG…NSNHDILDQR (254 aa). Catalysis depends on charge relay system residues S121, D145, and H295.

The protein belongs to the AB hydrolase superfamily.

The protein localises to the mitochondrion. Functionally, probable alcohol acetyltransferase that uses acetyl-CoA to synthesize acetate esters from various alcohols. Not involved in the synthesis of ethyl acetate. In Wickerhamomyces anomalus (strain ATCC 58044 / CBS 1984 / NCYC 433 / NRRL Y-366-8) (Yeast), this protein is Probable alcohol acetyltransferase (EAT2).